The primary structure comprises 734 residues: Photosystem I P700 chlorophyll a apoprotein A2 (734 aa).

Helical transmembrane passes span 46–69 (IFAS…FHVA), 135–158 (LYQG…LHLQ), 175–199 (LNHH…HVAI), 273–291 (IAHH…GHQY), 330–353 (LHFQ…QHMY), 369–395 (AALY…IFFI), 417–439 (AIIS…LYVH), and 517–535 (FLVH…LILV). [4Fe-4S] cluster is bound by residues cysteine 559 and cysteine 568. 2 consecutive transmembrane segments (helical) span residues 575–596 (AFYL…YWHW) and 643–665 (LSVW…MFLI). Residues histidine 654, methionine 662, and tyrosine 670 each contribute to the chlorophyll a site. A phylloquinone-binding site is contributed by tryptophan 671. The helical transmembrane segment at 707-727 (LVGLAHFSVGYIFTYAAFLIA) threads the bilayer.

This sequence belongs to the PsaA/PsaB family. In terms of assembly, the PsaA/B heterodimer binds the P700 chlorophyll special pair and subsequent electron acceptors. PSI consists of a core antenna complex that captures photons, and an electron transfer chain that converts photonic excitation into a charge separation. The eukaryotic PSI reaction center is composed of at least 11 subunits. The cofactor is P700 is a chlorophyll a/chlorophyll a' dimer, A0 is one or more chlorophyll a, A1 is one or both phylloquinones and FX is a shared 4Fe-4S iron-sulfur center..

It is found in the plastid. The protein resides in the chloroplast thylakoid membrane. The enzyme catalyses reduced [plastocyanin] + hnu + oxidized [2Fe-2S]-[ferredoxin] = oxidized [plastocyanin] + reduced [2Fe-2S]-[ferredoxin]. In terms of biological role, psaA and PsaB bind P700, the primary electron donor of photosystem I (PSI), as well as the electron acceptors A0, A1 and FX. PSI is a plastocyanin-ferredoxin oxidoreductase, converting photonic excitation into a charge separation, which transfers an electron from the donor P700 chlorophyll pair to the spectroscopically characterized acceptors A0, A1, FX, FA and FB in turn. Oxidized P700 is reduced on the lumenal side of the thylakoid membrane by plastocyanin. This chain is Photosystem I P700 chlorophyll a apoprotein A2, found in Chaetosphaeridium globosum (Charophycean green alga).